The following is a 510-amino-acid chain: NAD(P)H-quinone oxidoreductase subunit 2 A, chloroplastic (510 aa).

13 helical membrane passes run 24–44, 59–79, 99–119, 124–144, 149–169, 183–203, 229–249, 295–315, 323–343, 347–367, 395–415, 418–438, and 484–504; these read LLLFHGSFIFPECILIFGLIL, WFYFISSTSLVMSITALLFRW, IFQFLILLCSTLCIPLSVEYI, MAITEFLLFVLTATLGGMFLC, LITIFVAPECFSLCSYLLSGY, YLLMGGASSSILVHGFSWLYG, ISIALLSITVGIGFKLSPAPF, WHLLLEILAILSMILGNLIAI, MLAYSSIGQIGYVIIGIIVGD, GYASMITYMLFYISMNLGTFA, ALSSALCLLSLGGIPPLAGFF, LHLFWCGWQAGLYFLVSIGLL, and MIVCVIASTIPGISMNPIIAI.

It belongs to the complex I subunit 2 family. In terms of assembly, NDH is composed of at least 16 different subunits, 5 of which are encoded in the nucleus.

The protein localises to the plastid. It localises to the chloroplast thylakoid membrane. It carries out the reaction a plastoquinone + NADH + (n+1) H(+)(in) = a plastoquinol + NAD(+) + n H(+)(out). The catalysed reaction is a plastoquinone + NADPH + (n+1) H(+)(in) = a plastoquinol + NADP(+) + n H(+)(out). Functionally, NDH shuttles electrons from NAD(P)H:plastoquinone, via FMN and iron-sulfur (Fe-S) centers, to quinones in the photosynthetic chain and possibly in a chloroplast respiratory chain. The immediate electron acceptor for the enzyme in this species is believed to be plastoquinone. Couples the redox reaction to proton translocation, and thus conserves the redox energy in a proton gradient. The protein is NAD(P)H-quinone oxidoreductase subunit 2 A, chloroplastic of Amborella trichopoda.